A 165-amino-acid polypeptide reads, in one-letter code: Growth arrest and DNA damage-inducible protein GADD45 alpha (165 aa).

Threonine 2 is modified (phosphothreonine).

It belongs to the GADD45 family. Interacts with AURKA, PCNA, GADD45GIP1 and MAPK14.

The protein localises to the nucleus. Its function is as follows. Might affect PCNA interaction with some CDK (cell division protein kinase) complexes; stimulates DNA excision repair in vitro and inhibits entry of cells into S phase. In T-cells, functions as a regulator of p38 MAPKs by inhibiting p88 phosphorylation and activity. The polypeptide is Growth arrest and DNA damage-inducible protein GADD45 alpha (GADD45A) (Bos taurus (Bovine)).